We begin with the raw amino-acid sequence, 1807 residues long: Atrochrysone carboxylic acid synthase Agnpks1 (1807 aa).

An N-terminal acylcarrier protein transacylase domain (SAT) region spans residues 41 to 173; the sequence is LFRELHNHSK…ITGAQVIRQA (133 aa). A Ketosynthase family 3 (KS3) domain is found at 411–845; it reads QSKIAIVGMS…GGNTTILLEE (435 aa). Catalysis depends on for beta-ketoacyl synthase activity residues cysteine 584, histidine 720, and histidine 763. Residues 946 to 1265 form a malonyl-CoA:ACP transacylase (MAT) domain region; the sequence is FTFTGQGASY…SLAALHCAGV (320 aa). The interval 1334-1653 is product template (PT) domain; sequence TSTVHQIIQE…RILLSRFFSA (320 aa). The segment at 1338–1473 is N-terminal hotdog fold; sequence HQIIQESIDG…ATLIYGDPSE (136 aa). The 311-residue stretch at 1338 to 1648 folds into the PKS/mFAS DH domain; it reads HQIIQESIDG…FRRYPRILLS (311 aa). Histidine 1370 functions as the Proton acceptor; for dehydratase activity in the catalytic mechanism. Residues 1500–1648 form a C-terminal hotdog fold region; sequence VANRFNHQMA…FRRYPRILLS (149 aa). The active-site Proton donor; for dehydratase activity is aspartate 1559. Positions 1732-1806 constitute a Carrier domain; sequence DTTTAKAIQI…DLRSWLEEYY (75 aa). Serine 1766 bears the O-(pantetheine 4'-phosphoryl)serine mark.

The catalysed reaction is holo-[ACP] + 8 malonyl-CoA + 8 H(+) = atrochrysone carboxyl-[ACP] + 8 CO2 + 8 CoA + 2 H2O. It functions in the pathway secondary metabolite biosynthesis. Its function is as follows. Non-reducing polyketide synthase; part of the gene cluster that mediates the biosynthesis of agnestins, dihydroxy-xanthone metabolites. The pathway begins with the assembly and cyclization of atrochrysone thioester by the non-reducing polyketide synthase Agnpks1. The atrochrysone carboxyl ACP thioesterase AgnL7 then breaks the thioester bond and releases the atrochrysone carboxylic acid as the first enzyme-free intermediate. The decarboxylase AgnL1 then catalyzes the concerted decarboxylation-elimination required to convert atochrysone carboxylic acid into emodin anthrone, which is further oxidized to emodin by the anthrone oxygenase AgnL2. Emodin then undergoes reduction catalyzed by the oxidoreductase AgnL4 to yield the dihydroquinone tautomer which is the substrate for reduction by the short chain dehydrogenase AgnL6 reduction to produce hydroxyketone, followed by AgnL8 dehydration and likely spontaneous autoxidation to chrysophanol. Baeyer-Villiger oxidation by the oxidase AgnL3 leads to monodictyphenone via cleavage of the C-10/C-10a bond of chrysophanol. Alternative cleavage at the C-4a/C-10 bond of chrysophanol also leads to the formation some cephalone F. Further conversion to agnestins A and B, requires reduction to dihydro-monodictyphenone, oxidation to agnestin C probably via an epoxide, and rearrangement to either agnestin A or agnestin B directly, although agnestin A or agnestin B can also interconvert. Within the cluster, AgnR1 is the only unassigned oxidoreductase present which could be involved in this conversion. However, AgnR1 seems not to be involved in this step, and thus genes involved in the proposed oxidation/reduction may be located elsewhere on the genome. Further agnestin A derivatives are probably formed by spontaneous decarboxylations, dehydrations and methanolysis reactions. The polypeptide is Atrochrysone carboxylic acid synthase Agnpks1 (Paecilomyces divaricatus (Penicillium divaricatum)).